The following is a 330-amino-acid chain: Aspartate--ammonia ligase (330 aa).

Belongs to the class-II aminoacyl-tRNA synthetase family. AsnA subfamily.

It localises to the cytoplasm. It catalyses the reaction L-aspartate + NH4(+) + ATP = L-asparagine + AMP + diphosphate + H(+). It functions in the pathway amino-acid biosynthesis; L-asparagine biosynthesis; L-asparagine from L-aspartate (ammonia route): step 1/1. The protein is Aspartate--ammonia ligase of Haemophilus influenzae (strain ATCC 51907 / DSM 11121 / KW20 / Rd).